Consider the following 600-residue polypeptide: DNA mismatch repair protein MutL (600 aa).

Belongs to the DNA mismatch repair MutL/HexB family.

Its function is as follows. This protein is involved in the repair of mismatches in DNA. It is required for dam-dependent methyl-directed DNA mismatch repair. May act as a 'molecular matchmaker', a protein that promotes the formation of a stable complex between two or more DNA-binding proteins in an ATP-dependent manner without itself being part of a final effector complex. The sequence is that of DNA mismatch repair protein MutL from Rickettsia typhi (strain ATCC VR-144 / Wilmington).